Here is a 358-residue protein sequence, read N- to C-terminus: MQSTEPWSPSWGTLSWDYSGSGSLDQVELCPAWNLPYGHAIIPALYLAAFAVGLPGNAFVVWLLSRQRGPRRLVDTFVLHLAAADLGFVLTLPLWAAAEARGGLWPFGDGLCKVSSFALAVTRCAGALLLAGMSVDRYLAVGRPLSARPLRSARCVRAVCGAAWAAAFLAGLPALLYRGLQPSLDGVGSQCAEEPWEALQGVGLLLLLLTFALPLAVTLICYWRVSRRLPRVGRARSNSLRIIFTVESVFVGCWLPFGVLRSLFHLARLQALPLPCSLLLALRWGLTVTTCLAFVNSSANPVIYLLLDRSFRARARFGLCARAGRQVRRISSASSLSRDDSSVFRGRSPKVNSASATW.

The Extracellular segment spans residues 1-43; sequence MQSTEPWSPSWGTLSWDYSGSGSLDQVELCPAWNLPYGHAIIP. A helical transmembrane segment spans residues 44-64; sequence ALYLAAFAVGLPGNAFVVWLL. At 65–76 the chain is on the cytoplasmic side; sequence SRQRGPRRLVDT. Residues 77–97 form a helical membrane-spanning segment; sequence FVLHLAAADLGFVLTLPLWAA. Residues 98–113 are Extracellular-facing; sequence AEARGGLWPFGDGLCK. A disulfide bridge links cysteine 112 with cysteine 191. A helical membrane pass occupies residues 114-134; the sequence is VSSFALAVTRCAGALLLAGMS. At 135–155 the chain is on the cytoplasmic side; the sequence is VDRYLAVGRPLSARPLRSARC. A helical transmembrane segment spans residues 156–176; that stretch reads VRAVCGAAWAAAFLAGLPALL. Residues 177–200 are Extracellular-facing; it reads YRGLQPSLDGVGSQCAEEPWEALQ. A helical transmembrane segment spans residues 201–221; it reads GVGLLLLLLTFALPLAVTLIC. Over 222–239 the chain is Cytoplasmic; that stretch reads YWRVSRRLPRVGRARSNS. Residues 240–260 traverse the membrane as a helical segment; it reads LRIIFTVESVFVGCWLPFGVL. Residues 261–284 lie on the Extracellular side of the membrane; it reads RSLFHLARLQALPLPCSLLLALRW. The chain crosses the membrane as a helical span at residues 285–307; that stretch reads GLTVTTCLAFVNSSANPVIYLLL. Residues 308 to 358 lie on the Cytoplasmic side of the membrane; the sequence is DRSFRARARFGLCARAGRQVRRISSASSLSRDDSSVFRGRSPKVNSASATW. The disordered stretch occupies residues 339 to 358; sequence DDSSVFRGRSPKVNSASATW.

The protein belongs to the G-protein coupled receptor 1 family.

It localises to the membrane. In terms of biological role, orphan receptor. This Mus musculus (Mouse) protein is Probable G-protein coupled receptor 25 (Gpr25).